We begin with the raw amino-acid sequence, 64 residues long: MPKMKSNKGASKRFKKTAGGIKFKHATKRHILTKRTTKNKRQLRPNSLLPKCEVAAVARMLPYA.

This sequence belongs to the bacterial ribosomal protein bL35 family.

This chain is Large ribosomal subunit protein bL35, found in Aliivibrio fischeri (strain ATCC 700601 / ES114) (Vibrio fischeri).